We begin with the raw amino-acid sequence, 153 residues long: uncharacterized protein (153 aa).

Residues 16–40 (DEQTPLLNNDGIQRTPPSAEADMSL) form a disordered region. Over residues 20-31 (PLLNNDGIQRTP) the composition is skewed to polar residues.

This is an uncharacterized protein from Schizosaccharomyces pombe (strain 972 / ATCC 24843) (Fission yeast).